The following is a 406-amino-acid chain: Phosphopentomutase (406 aa).

6 residues coordinate Mn(2+): Asp-10, Asp-305, His-310, Asp-346, His-347, and His-358.

Belongs to the phosphopentomutase family. It depends on Mn(2+) as a cofactor.

The protein resides in the cytoplasm. It carries out the reaction 2-deoxy-alpha-D-ribose 1-phosphate = 2-deoxy-D-ribose 5-phosphate. The catalysed reaction is alpha-D-ribose 1-phosphate = D-ribose 5-phosphate. It participates in carbohydrate degradation; 2-deoxy-D-ribose 1-phosphate degradation; D-glyceraldehyde 3-phosphate and acetaldehyde from 2-deoxy-alpha-D-ribose 1-phosphate: step 1/2. In terms of biological role, isomerase that catalyzes the conversion of deoxy-ribose 1-phosphate (dRib-1-P) and ribose 1-phosphate (Rib-1-P) to deoxy-ribose 5-phosphate (dRib-5-P) and ribose 5-phosphate (Rib-5-P), respectively. This Sinorhizobium fredii (strain NBRC 101917 / NGR234) protein is Phosphopentomutase.